A 730-amino-acid polypeptide reads, in one-letter code: Acetylene hydratase (730 aa).

[4Fe-4S] cluster is bound by residues cysteine 9 and cysteine 12. Aspartate 13 is a catalytic residue. Cysteine 16 and cysteine 46 together coordinate [4Fe-4S] cluster. W-bis(molybdopterin guanine dinucleotide)-binding positions include lysine 48, 111 to 114 (TEIN), cysteine 141, 172 to 173 (KN), 177 to 179 (HNW), 199 to 202 (LDPR), 218 to 221 (YGTD), serine 296, glutamine 300, 416 to 418 (ASN), 422 to 423 (GY), 442 to 444 (YDQ), aspartate 460, arginine 465, 602 to 613 (FAGLREDSNFQS), arginine 606, histidine 676, aspartate 699, and arginine 720.

Belongs to the prokaryotic molybdopterin-containing oxidoreductase family. As to quaternary structure, monomer. Requires [4Fe-4S] cluster as cofactor. The cofactor is W-bis(molybdopterin guanine dinucleotide).

The enzyme catalyses acetaldehyde = acetylene + H2O. Catalyzes the hydration of acetylene to form acetaldehyde. Ethylene cannot act as a substrate. The polypeptide is Acetylene hydratase (Syntrophotalea acetylenica (Pelobacter acetylenicus)).